The sequence spans 944 residues: Protein phosphatase 1 regulatory subunit 37 homolog (944 aa).

The tract at residues Q42–I71 is disordered. 5 LRR repeats span residues S203–F224, S232–A255, S262–I282, G290–Q311, and S318–C338. Residues E517–S598 are disordered. The segment covering G522–T542 has biased composition (basic and acidic residues). 2 stretches are compositionally biased toward polar residues: residues P543–E554 and P567–K585. Positions L586–F595 are enriched in basic residues.

Belongs to the PPP1R37 family.

This chain is Protein phosphatase 1 regulatory subunit 37 homolog, found in Caenorhabditis elegans.